The primary structure comprises 141 residues: Large ribosomal subunit protein uL11 (141 aa).

Belongs to the universal ribosomal protein uL11 family. Part of the ribosomal stalk of the 50S ribosomal subunit. Interacts with L10 and the large rRNA to form the base of the stalk. L10 forms an elongated spine to which L12 dimers bind in a sequential fashion forming a multimeric L10(L12)X complex. One or more lysine residues are methylated.

Its function is as follows. Forms part of the ribosomal stalk which helps the ribosome interact with GTP-bound translation factors. The chain is Large ribosomal subunit protein uL11 from Clostridium acetobutylicum (strain ATCC 824 / DSM 792 / JCM 1419 / IAM 19013 / LMG 5710 / NBRC 13948 / NRRL B-527 / VKM B-1787 / 2291 / W).